Reading from the N-terminus, the 156-residue chain is Small ribosomal subunit protein uS7 (156 aa).

Belongs to the universal ribosomal protein uS7 family. As to quaternary structure, part of the 30S ribosomal subunit. Contacts proteins S9 and S11.

Functionally, one of the primary rRNA binding proteins, it binds directly to 16S rRNA where it nucleates assembly of the head domain of the 30S subunit. Is located at the subunit interface close to the decoding center, probably blocks exit of the E-site tRNA. The polypeptide is Small ribosomal subunit protein uS7 (Geotalea daltonii (strain DSM 22248 / JCM 15807 / FRC-32) (Geobacter daltonii)).